The chain runs to 1064 residues: DNA-directed RNA polymerase subunit beta (1064 aa).

Belongs to the RNA polymerase beta chain family. In plastids the minimal PEP RNA polymerase catalytic core is composed of four subunits: alpha, beta, beta', and beta''. When a (nuclear-encoded) sigma factor is associated with the core the holoenzyme is formed, which can initiate transcription.

It localises to the plastid. It is found in the chloroplast. The catalysed reaction is RNA(n) + a ribonucleoside 5'-triphosphate = RNA(n+1) + diphosphate. Its function is as follows. DNA-dependent RNA polymerase catalyzes the transcription of DNA into RNA using the four ribonucleoside triphosphates as substrates. This chain is DNA-directed RNA polymerase subunit beta, found in Jasminum nudiflorum (Winter jasmine).